Reading from the N-terminus, the 324-residue chain is 2-oxoisovalerate dehydrogenase subunit beta (324 aa).

Thiamine diphosphate-binding positions include E29, 58–60, Q82, and 86–89; these read LSE and YIFP. Residues 83-86 and H129 each bind substrate; that span reads FADY. Residue H129 is the Proton acceptor of the active site.

Heterotetramer of two alpha and two beta chains. Directly associated with ODBA in the E1 complex. Thiamine diphosphate is required as a cofactor.

It carries out the reaction N(6)-[(R)-lipoyl]-L-lysyl-[protein] + 3-methyl-2-oxobutanoate + H(+) = N(6)-[(R)-S(8)-2-methylpropanoyldihydrolipoyl]-L-lysyl-[protein] + CO2. Its function is as follows. The branched-chain alpha-keto dehydrogenase complex catalyzes the overall conversion of alpha-keto acids to acyl-CoA and CO(2). It contains multiple copies of three enzymatic components: branched-chain alpha-keto acid decarboxylase (E1), lipoamide acyltransferase (E2) and lipoamide dehydrogenase (E3). The chain is 2-oxoisovalerate dehydrogenase subunit beta from Thermus thermophilus (strain ATCC BAA-163 / DSM 7039 / HB27).